Consider the following 364-residue polypeptide: DNA replication and repair protein RecF (364 aa).

30-37 contacts ATP; the sequence is GNNGMGKT.

The protein belongs to the RecF family.

The protein localises to the cytoplasm. In terms of biological role, the RecF protein is involved in DNA metabolism; it is required for DNA replication and normal SOS inducibility. RecF binds preferentially to single-stranded, linear DNA. It also seems to bind ATP. This is DNA replication and repair protein RecF from Porphyromonas gingivalis (strain ATCC BAA-308 / W83).